The following is a 28-amino-acid chain: Grammistin Gs A (28 aa).

It belongs to the grammistin family. Group 3 subfamily. As to quaternary structure, exists as aggregates of 3-4 molecules. As to expression, expressed by the skin glands.

It is found in the secreted. In terms of biological role, thanks to its amphiphilic alpha-helice(s), it may integrate into membrane phospholipids, leading to lysis of the membrane. Has no substantial hemolytic activity. Has antibacterial activity with a broad spectrum against various species of bacteria including both Gram-positive and Gram-negative groups. The chain is Grammistin Gs A from Grammistes sexlineatus (Goldenstriped soapfish).